Here is a 721-residue protein sequence, read N- to C-terminus: MQGQTQSISFDGREIRLTTGRYAPQAGGSVMIECGDTSVLVTATRSSGREGIDFLPLICDYEERLYAAGRIPGSFMRREGRPPERATLISRLIDRPMRPLFPSWLRDDLQIVATCMSLDERVPADVLSVTGASMATLLAGIPFYGPMAAVRVGLLGDDFVLNPSYREIERGDLDLVVAGTPEGIVMVEAGANQLPEQDVIEAIDFGYEAVCELIKAQESILKDAGIEQVKPEQPEEDSTLPVYLEKACTKAIGEVLSQFDQSKADRDSKLDAIRSSTAETIEALKDSDPVRKLVSANSKALPTSFKALTKKLMRQQIVKDGKRVDGRSLDQVRPISAAAGVLPKRVHGSGLFQRGLTQVLSTATLGTPSDAQEMDDLNPSTEKTYLHHYNFPPYSVGETKPMRSPGRREIGHGALAERAILPVLPAKDTFPYVVRVVSEVLSSNGSTSMGSVCGSTLALMDAGVPLKAPVSGAAMGLIKEGDEVRILTDIQGIEDFLGDMDFKVAGTDKGITALQMDMKITGLAMGTIAEAINQARPARLHILEKMMEAIDTPRDGLSPHAPRLLSFRIDPELIGTVIGPGGRTIKGITERTNTKIDIEDSGIVTIASHDGAAADEAQKIIEGLTRKVNEGEVFSGAITRIIPIGAFVEILPGKEGMIHISQLSEARVEKVEDVVKVGDEVTVRVREIDNRGRINLTLRGVPQNGEEAEPAPAPTPVAPLN.

Aspartate 495 and aspartate 501 together coordinate Mg(2+). One can recognise a KH domain in the interval 562–621 (PRLLSFRIDPELIGTVIGPGGRTIKGITERTNTKIDIEDSGIVTIASHDGAAADEAQKII). The 69-residue stretch at 631-699 (GEVFSGAITR…NRGRINLTLR (69 aa)) folds into the S1 motif domain. A disordered region spans residues 700–721 (GVPQNGEEAEPAPAPTPVAPLN). The span at 711-721 (APAPTPVAPLN) shows a compositional bias: pro residues.

It belongs to the polyribonucleotide nucleotidyltransferase family. The cofactor is Mg(2+).

It is found in the cytoplasm. It catalyses the reaction RNA(n+1) + phosphate = RNA(n) + a ribonucleoside 5'-diphosphate. In terms of biological role, involved in mRNA degradation. Catalyzes the phosphorolysis of single-stranded polyribonucleotides processively in the 3'- to 5'-direction. This chain is Polyribonucleotide nucleotidyltransferase, found in Synechococcus sp. (strain WH7803).